The primary structure comprises 975 residues: Exportin-2 (975 aa).

The Importin N-terminal domain occupies 29 to 105 (AEKLLESTEL…KTLIVTLMLH (77 aa)).

It belongs to the XPO2/CSE1 family. In terms of assembly, binds with high affinity to importin-alpha only in the presence of RanGTP.

It localises to the cytoplasm. Its subcellular location is the nucleus. In terms of biological role, export receptor for importin alpha. Mediates importin-alpha re-export from the nucleus to the cytoplasm after import substrates have been released into the nucleoplasm. This chain is Exportin-2, found in Drosophila melanogaster (Fruit fly).